The following is a 396-amino-acid chain: Bifunctional enzyme Fae/Hps (396 aa).

Residues 1 to 161 (MMLIGEALIG…HEKDRAAHAV (161 aa)) are formaldehyde-activating enzyme. The Proton donor role is filled by histidine 17. Positions 19, 48, 66, 68, and 83 each coordinate substrate. The 3-hexulose-6-phosphate synthase stretch occupies residues 162-396 (MGFKISKLWD…IDQFRIMTDF (235 aa)).

It in the N-terminal section; belongs to the formaldehyde-activating enzyme family. In the C-terminal section; belongs to the HPS/KGPDC family. HPS subfamily.

The enzyme catalyses 5,6,7,8-tetrahydromethanopterin + formaldehyde = 5,10-methylenetetrahydromethanopterin + H2O. It carries out the reaction D-ribulose 5-phosphate + formaldehyde = D-arabino-hex-3-ulose 6-phosphate. It functions in the pathway carbohydrate biosynthesis; D-ribose 5-phosphate biosynthesis. Its function is as follows. Catalyzes the condensation of formaldehyde with tetrahydromethanopterin (H(4)MPT) to 5,10-methylenetetrahydromethanopterin. In terms of biological role, catalyzes the reversible formation of ribulose-5-phosphate and formaldehyde from 3-hexulose-6-phosphate. This chain is Bifunctional enzyme Fae/Hps, found in Methanococcoides burtonii (strain DSM 6242 / NBRC 107633 / OCM 468 / ACE-M).